A 477-amino-acid polypeptide reads, in one-letter code: MQVLHVCSEMFPLLKTGGLADVIGALPAAQIADGVDVRVLLPGFPDIRRGIPDAHVVSRRDTFAGKISLLFGHYNGVGIYLIDAPHLYERPGSPYHDTNLYAYTDNVLRFALLGWVGCEMACGLDPFWRPDVVHAHDWHAGLAPAYLAARGRPAKSVFTVHNLAYQGMFYAKHMDDIELPWSFFNMHGLEFNGQLSFLKAGLYYADHITAVSPTYAREITEPQFAYGMEGLLRQRHLEGRLSGILNGVDEKIWNPESDLLLASRYKRDTLEEKAENKRQLQIAMGLKVNDKVPLFAVVSRLTNQKGLDLVLEALPGLLEQGGQLALLGAGDPVLQEGFLAAAAEHPGQVGVQIGYHEAFSHRIMGGADVILVPSRFEPCGLTQLYGLKYGTLPLVRRTGGLADTVSDSSLENLADGIASGFVFEDSNAWSLLRAIRRAFVLWSRPSLWRFVQRQAMAMDFSWQVAAKSYRELYYRLK.

Lysine 15 contributes to the ADP-alpha-D-glucose binding site.

It belongs to the glycosyltransferase 1 family. Bacterial/plant glycogen synthase subfamily.

It catalyses the reaction [(1-&gt;4)-alpha-D-glucosyl](n) + ADP-alpha-D-glucose = [(1-&gt;4)-alpha-D-glucosyl](n+1) + ADP + H(+). Its pathway is glycan biosynthesis; glycogen biosynthesis. In terms of biological role, synthesizes alpha-1,4-glucan chains using ADP-glucose. The chain is Glycogen synthase from Salmonella choleraesuis (strain SC-B67).